The sequence spans 394 residues: Chorismate synthase (394 aa).

R62 is an NADP(+) binding site. Residues 144 to 146 (RAS), G307, 322 to 326 (KPTPT), and R349 contribute to the FMN site.

It belongs to the chorismate synthase family. Homotetramer. Requires FMNH2 as cofactor.

It carries out the reaction 5-O-(1-carboxyvinyl)-3-phosphoshikimate = chorismate + phosphate. The protein operates within metabolic intermediate biosynthesis; chorismate biosynthesis; chorismate from D-erythrose 4-phosphate and phosphoenolpyruvate: step 7/7. Functionally, catalyzes the anti-1,4-elimination of the C-3 phosphate and the C-6 proR hydrogen from 5-enolpyruvylshikimate-3-phosphate (EPSP) to yield chorismate, which is the branch point compound that serves as the starting substrate for the three terminal pathways of aromatic amino acid biosynthesis. This reaction introduces a second double bond into the aromatic ring system. In Acetivibrio thermocellus (strain ATCC 27405 / DSM 1237 / JCM 9322 / NBRC 103400 / NCIMB 10682 / NRRL B-4536 / VPI 7372) (Clostridium thermocellum), this protein is Chorismate synthase.